Consider the following 394-residue polypeptide: MSKEKFERTKPHVNVGTIGHVDHGKTTLTAAITTVLAKHYGGAARAFDQIDNAPEEKARGITINTSHVEYDTPTRHYAHVDCPGHADYVKNMITGAAQMDGAILVVAATDGPMPQTREHILLGRQVGVPYIIVFLNKCDMVDDEELLELVEMEVRELLSQYDFPGDDTPIVRGSALQALNGVAEWEEKILELANHLDTYIPEPQRAIDQPFLLPIEDVFSISGRGTVVTGRVERGIIRTGEEVEIVGIKATTKTTVTGVEMFRKLLDEGRAGENVGALLRGTKREEIERGQVLAKPGSITPHTDFESEVYVLSKEEGGRHTPFFKGYRPQFYFRTTDVTGTIELPEGVEMVMPGDNIKMTVSLIHPIAMDQGLRFAIREGGRTVGAGVVAKIIK.

Residues 10–204 form the tr-type G domain; that stretch reads KPHVNVGTIG…HLDTYIPEPQ (195 aa). Residues 19–26 form a G1 region; it reads GHVDHGKT. 19-26 is a GTP binding site; sequence GHVDHGKT. Thr26 lines the Mg(2+) pocket. A G2 region spans residues 60–64; it reads GITIN. The interval 81–84 is G3; sequence DCPG. GTP-binding positions include 81–85 and 136–139; these read DCPGH and NKCD. The tract at residues 136 to 139 is G4; the sequence is NKCD. Residues 174 to 176 are G5; sequence SAL.

The protein belongs to the TRAFAC class translation factor GTPase superfamily. Classic translation factor GTPase family. EF-Tu/EF-1A subfamily. As to quaternary structure, monomer.

The protein resides in the cytoplasm. It catalyses the reaction GTP + H2O = GDP + phosphate + H(+). In terms of biological role, GTP hydrolase that promotes the GTP-dependent binding of aminoacyl-tRNA to the A-site of ribosomes during protein biosynthesis. This chain is Elongation factor Tu-A, found in Pasteurella multocida (strain Pm70).